Consider the following 326-residue polypeptide: H-2 class I histocompatibility antigen, Q8 alpha chain (326 aa).

The first 21 residues, 1-21 (MALTMLLLLVAAALTLIETRA), serve as a signal peptide directing secretion. The alpha-1 stretch occupies residues 22–111 (GPHSLRYFHT…AQRYYNQSKG (90 aa)). Residues 22–305 (GPHSLRYFHT…EPPPSTVSNM (284 aa)) lie on the Extracellular side of the membrane. An N-linked (GlcNAc...) asparagine glycan is attached at N107. The segment at 112–203 (GSHTLQWMYG…QLRKETLLCT (92 aa)) is alpha-2. Disulfide bonds link C122–C185 and C224–C280. The segment at 204 to 295 (DPPKAHVTHH…GLPEPLTLRW (92 aa)) is alpha-3. The region spanning 206 to 294 (PKAHVTHHPR…EGLPEPLTLR (89 aa)) is the Ig-like C1-type domain. An N-linked (GlcNAc...) asparagine glycan is attached at N277. Residues 296–305 (EPPPSTVSNM) form a connecting peptide region. Residues 306 to 326 (ANVAILVVLVAWPSLELWWIL) form a helical membrane-spanning segment.

The protein belongs to the MHC class I family. Heterodimer of an alpha chain and a beta chain (beta-2-microglobulin).

Its subcellular location is the membrane. Its function is as follows. Involved in the presentation of foreign antigens to the immune system. This chain is H-2 class I histocompatibility antigen, Q8 alpha chain (H2-Q8), found in Mus musculus (Mouse).